The sequence spans 340 residues: uncharacterized protein (340 aa).

One can recognise a Radical SAM core domain in the interval 58–307; that stretch reads AALPFRYTVN…PSYREMLRER (250 aa). Positions 72, 76, and 79 each coordinate [4Fe-4S] cluster. 2 helical membrane passes run 140–160 and 243–263; these read YALMPGIIGALAASGTPLSIL and QLLGQIAAAGATGVTVFGLHL.

The cofactor is [4Fe-4S] cluster.

It is found in the cell membrane. This is an uncharacterized protein from Mycobacterium tuberculosis (strain CDC 1551 / Oshkosh).